The primary structure comprises 380 residues: Cytochrome b (380 aa).

Transmembrane regions (helical) follow at residues 33–53 (FGSLLGACLILQITTGLFLAM), 77–98 (WTIRYLHANGASMFFICLFLHI), 113–133 (WNIGIILLLTTMAAAFMGYVL), and 178–198 (FFTFHFILPFIITALTTLHLL). Heme b-binding residues include His-83 and His-97. Heme b-binding residues include His-182 and His-196. His-201 is a binding site for a ubiquinone. 4 consecutive transmembrane segments (helical) span residues 226–246 (IKDILGLFLFLLTLMTLTLFS), 288–308 (LGGVLALLLSILILAMIPILH), 320–340 (LSQLLYWFLIADLFTLTWIGG), and 347–367 (FITIGQVASVLYFTTILFLMP).

Belongs to the cytochrome b family. In terms of assembly, the cytochrome bc1 complex contains 11 subunits: 3 respiratory subunits (MT-CYB, CYC1 and UQCRFS1), 2 core proteins (UQCRC1 and UQCRC2) and 6 low-molecular weight proteins (UQCRH/QCR6, UQCRB/QCR7, UQCRQ/QCR8, UQCR10/QCR9, UQCR11/QCR10 and a cleavage product of UQCRFS1). This cytochrome bc1 complex then forms a dimer. It depends on heme b as a cofactor.

The protein localises to the mitochondrion inner membrane. Component of the ubiquinol-cytochrome c reductase complex (complex III or cytochrome b-c1 complex) that is part of the mitochondrial respiratory chain. The b-c1 complex mediates electron transfer from ubiquinol to cytochrome c. Contributes to the generation of a proton gradient across the mitochondrial membrane that is then used for ATP synthesis. The sequence is that of Cytochrome b (MT-CYB) from Gorilla gorilla gorilla (Western lowland gorilla).